A 331-amino-acid chain; its full sequence is Lipoyl synthase (331 aa).

[4Fe-4S] cluster-binding residues include Cys-60, Cys-65, Cys-71, Cys-86, Cys-90, Cys-93, and Ser-301. The Radical SAM core domain maps to 72–290 (WSRGTATFML…REEGMQLGFL (219 aa)).

Belongs to the radical SAM superfamily. Lipoyl synthase family. [4Fe-4S] cluster is required as a cofactor.

Its subcellular location is the cytoplasm. It carries out the reaction [[Fe-S] cluster scaffold protein carrying a second [4Fe-4S](2+) cluster] + N(6)-octanoyl-L-lysyl-[protein] + 2 oxidized [2Fe-2S]-[ferredoxin] + 2 S-adenosyl-L-methionine + 4 H(+) = [[Fe-S] cluster scaffold protein] + N(6)-[(R)-dihydrolipoyl]-L-lysyl-[protein] + 4 Fe(3+) + 2 hydrogen sulfide + 2 5'-deoxyadenosine + 2 L-methionine + 2 reduced [2Fe-2S]-[ferredoxin]. It participates in protein modification; protein lipoylation via endogenous pathway; protein N(6)-(lipoyl)lysine from octanoyl-[acyl-carrier-protein]: step 2/2. In terms of biological role, catalyzes the radical-mediated insertion of two sulfur atoms into the C-6 and C-8 positions of the octanoyl moiety bound to the lipoyl domains of lipoate-dependent enzymes, thereby converting the octanoylated domains into lipoylated derivatives. This chain is Lipoyl synthase, found in Deinococcus radiodurans (strain ATCC 13939 / DSM 20539 / JCM 16871 / CCUG 27074 / LMG 4051 / NBRC 15346 / NCIMB 9279 / VKM B-1422 / R1).